The chain runs to 420 residues: tRNA (guanine-N(7)-)-methyltransferase non-catalytic subunit TRM82 (420 aa).

Basic and acidic residues predominate over residues 59-68 (KENDSKRQKS). The disordered stretch occupies residues 59–82 (KENDSKRQKSESGQAKVSKIPTPG). 4 WD repeats span residues 87–127 (PIYN…DNCL), 179–220 (GHVS…VIKN), 224–266 (GHHE…AKIE), and 340–379 (SYEDNVLDMCYIEATNTLISAHDSDKNQLFQQQKFDEETN).

The protein belongs to the WD repeat TRM82 family. Forms a heterodimer with the catalytic subunit TRM8.

The protein resides in the nucleus. Its pathway is tRNA modification; N(7)-methylguanine-tRNA biosynthesis. Functionally, required for the formation of N(7)-methylguanine at position 46 (m7G46) in tRNA. In the complex, it is required to stabilize and induce conformational changes of the catalytic subunit. The chain is tRNA (guanine-N(7)-)-methyltransferase non-catalytic subunit TRM82 from Meyerozyma guilliermondii (strain ATCC 6260 / CBS 566 / DSM 6381 / JCM 1539 / NBRC 10279 / NRRL Y-324) (Yeast).